A 546-amino-acid chain; its full sequence is Chaperonin GroEL 2 (546 aa).

Residues 30–33, K51, 87–91, G415, and D495 contribute to the ATP site; these read TLGP and DGTTT.

This sequence belongs to the chaperonin (HSP60) family. Forms a cylinder of 14 subunits composed of two heptameric rings stacked back-to-back. Interacts with the co-chaperonin GroES.

The protein localises to the cytoplasm. The enzyme catalyses ATP + H2O + a folded polypeptide = ADP + phosphate + an unfolded polypeptide.. Its function is as follows. Together with its co-chaperonin GroES, plays an essential role in assisting protein folding. The GroEL-GroES system forms a nano-cage that allows encapsulation of the non-native substrate proteins and provides a physical environment optimized to promote and accelerate protein folding. This chain is Chaperonin GroEL 2, found in Burkholderia cenocepacia (strain HI2424).